Consider the following 145-residue polypeptide: Small ribosomal subunit protein uS15 (145 aa).

The protein belongs to the universal ribosomal protein uS15 family. Part of the 30S ribosomal subunit.

The chain is Small ribosomal subunit protein uS15 from Thermoplasma acidophilum (strain ATCC 25905 / DSM 1728 / JCM 9062 / NBRC 15155 / AMRC-C165).